The following is a 177-amino-acid chain: Large ribosomal subunit protein uL6 (177 aa).

Belongs to the universal ribosomal protein uL6 family. As to quaternary structure, part of the 50S ribosomal subunit.

Functionally, this protein binds to the 23S rRNA, and is important in its secondary structure. It is located near the subunit interface in the base of the L7/L12 stalk, and near the tRNA binding site of the peptidyltransferase center. This chain is Large ribosomal subunit protein uL6, found in Acinetobacter baumannii (strain SDF).